A 293-amino-acid polypeptide reads, in one-letter code: Protein PET54 (293 aa).

The protein localises to the mitochondrion inner membrane. Activator of specific mitochondrial mRNAs. PET54 is involved in the excision of intron aI5-beta from pre-mRNA for cytochrome c oxidase I (COX1) and plays a role in promoting the translation of COX3. The polypeptide is Protein PET54 (PET54) (Saccharomyces cerevisiae (strain ATCC 204508 / S288c) (Baker's yeast)).